We begin with the raw amino-acid sequence, 310 residues long: MKPKIFIDGEHGTTGLQIRTRMAGRTDLELLSIPEAERRNAAMREDLLNSADIAILCLPDDASREAVAMVAGNNRVRIIDTSTAHRVAPDWAYGFAEMDKAQPRKIRDARHVANPGCYPTGAIALIRPLRQAGILPDGYPVTVNAVSGYTGGGKQMIAQIEDDKSPDHIRAPHFLYGLTLKHKHVPEMKMHGLLERAPVFSPSVGKFAQGMIVQVPLYVDDLAAGATIESIHRALVDHYAGQSIVEVVPLEESAKLARIDATELAGKDTMKLFVFGTDGGAHVNMVALLDNLGKGASGAAVQNMDLMLSA.

The active site involves C117.

The protein belongs to the NAGSA dehydrogenase family. Type 2 subfamily.

The protein localises to the cytoplasm. It carries out the reaction N-acetyl-L-glutamate 5-semialdehyde + phosphate + NADP(+) = N-acetyl-L-glutamyl 5-phosphate + NADPH + H(+). It participates in amino-acid biosynthesis; L-arginine biosynthesis; N(2)-acetyl-L-ornithine from L-glutamate: step 3/4. Catalyzes the NADPH-dependent reduction of N-acetyl-5-glutamyl phosphate to yield N-acetyl-L-glutamate 5-semialdehyde. The chain is N-acetyl-gamma-glutamyl-phosphate reductase from Sinorhizobium medicae (strain WSM419) (Ensifer medicae).